The chain runs to 815 residues: Lon protease 1 (815 aa).

One can recognise a Lon N-terminal domain in the interval 14–211 (IAILPLLGTV…KLNEVLTREL (198 aa)). 370–377 (GPPGVGKT) is a binding site for ATP. The Lon proteolytic domain occupies 606–787 (TDRPGIVTGL…GQVIELALRA (182 aa)). Residues Ser693 and Lys736 contribute to the active site.

Belongs to the peptidase S16 family. In terms of assembly, homohexamer. Organized in a ring with a central cavity.

The protein resides in the cytoplasm. It carries out the reaction Hydrolysis of proteins in presence of ATP.. ATP-dependent serine protease that mediates the selective degradation of mutant and abnormal proteins as well as certain short-lived regulatory proteins. Required for cellular homeostasis and for survival from DNA damage and developmental changes induced by stress. Degrades polypeptides processively to yield small peptide fragments that are 5 to 10 amino acids long. Binds to DNA in a double-stranded, site-specific manner. The polypeptide is Lon protease 1 (Herpetosiphon aurantiacus (strain ATCC 23779 / DSM 785 / 114-95)).